A 542-amino-acid chain; its full sequence is Cytochrome P450 monooxygenase TRI1 (542 aa).

The helical transmembrane segment at Leu-37 to Leu-54 threads the bilayer. 3 N-linked (GlcNAc...) asparagine glycosylation sites follow: Asn-167, Asn-297, and Asn-428. Residue Cys-469 coordinates heme.

The protein belongs to the cytochrome P450 family. Heme is required as a cofactor.

The protein resides in the membrane. It participates in sesquiterpene biosynthesis; trichothecene biosynthesis. Its function is as follows. Cytochrome P450 monooxygenase; part of 2-gene cluster involved in trichothecene C-8 modification that mediates the biosynthesis of T2-toxin. The biosynthesis of trichothecenes begins with the cyclization of farnesyl diphosphate to trichodiene and is catalyzed by the trichodiene synthase TRI5. Trichodiene undergoes a series of oxygenations catalyzed by the cytochrome P450 monooxygenase TRI4. TRI4 controls the addition of four oxygens at C-2, C-3, C-11, and the C-12, C-13-epoxide to form the intermediate isotrichotriol. Isotrichotriol then undergoes a non-enzymatic isomerization and cyclization to form isotrichodermol. During this process, the oxygen at the C-2 position becomes the pyran ring oxygen and the hydroxyl group at C-11 is lost. More complex type A trichothecenes are built by modifying isotrichodermol through a series of paired hydroxylation and acetylation or acylation steps. Isotrichodermol is converted to isotrichodermin by the acetyltransferase TRI101. TRI101 encodes a C-3 transacetylase that acts as a self-protection or resistance factor during biosynthesis and that the presence of a free C-3 hydroxyl group is a key component of Fusarium trichothecene phytotoxicity. A second hydroxyl group is added to C-15 by the trichothecene C-15 hydroxylase TRI11, producing 15-decalonectrin, which is then acetylated by TRI3, producing calonectrin. A third hydroxyl group is added at C-4 by the cytochrome P450 monooxygenase TRI13, converting calonectrin to 3,15-diacetoxyspirpenol, which is subsequently acetylated by the acetyltransferase TRI7. A fourth hydroxyl group is added to C-8 by the cytochrome P450 monooxygenase TRI1, followed by the addition of an isovaleryl moiety by TRI16. Finally, the acetyl group is removed from the C-3 position by the trichothecene C-3 esterase TRI8 to produce T-2 toxin. This is Cytochrome P450 monooxygenase TRI1 from Fusarium sporotrichioides.